The following is a 631-amino-acid chain: Origin recognition complex subunit 1 (631 aa).

2 stretches are compositionally biased toward low complexity: residues 1–14 and 22–37; these read MTDE…YPPI and KLNN…NNNH. The interval 1–164 is disordered; the sequence is MTDESSSSIS…EEEDEEGKFN (164 aa). Residues 55–80 show a composition bias toward basic and acidic residues; that stretch reads DNEKIGFSDPENEKINKHKASFKDSN. Residues 91–104 are compositionally biased toward acidic residues; the sequence is EDTDDDDYEDEDED. Positions 105–133 are enriched in basic and acidic residues; it reads ENHKIKDESDNSEDFNNHTKNTTDLDEGF. A compositionally biased stretch (acidic residues) spans 141–160; that stretch reads ESEEEEEEEEYEEEEEEDEE. ATP is bound by residues Val-230 and 265-273; that span reads GMPGTGKTA. 2 residues coordinate Mg(2+): Asp-361 and Glu-362. ATP-binding residues include Glu-362, Asn-395, and Arg-460.

Belongs to the ORC1 family. As to quaternary structure, ORC is composed of six subunits.

The protein localises to the nucleus. Functionally, component of the origin recognition complex (ORC) that binds origins of replication. DNA-binding is ATP-dependent, however specific DNA sequences that define origins of replication have not been identified so far. ORC is required to assemble the pre-replication complex necessary to initiate DNA replication. The polypeptide is Origin recognition complex subunit 1 (orcA) (Dictyostelium discoideum (Social amoeba)).